Reading from the N-terminus, the 314-residue chain is Porphobilinogen deaminase (314 aa).

Residue Cys234 is modified to S-(dipyrrolylmethanemethyl)cysteine.

It belongs to the HMBS family. Monomer. The cofactor is dipyrromethane.

It carries out the reaction 4 porphobilinogen + H2O = hydroxymethylbilane + 4 NH4(+). The protein operates within porphyrin-containing compound metabolism; protoporphyrin-IX biosynthesis; coproporphyrinogen-III from 5-aminolevulinate: step 2/4. Functionally, tetrapolymerization of the monopyrrole PBG into the hydroxymethylbilane pre-uroporphyrinogen in several discrete steps. This Mycobacterium marinum (strain ATCC BAA-535 / M) protein is Porphobilinogen deaminase.